We begin with the raw amino-acid sequence, 596 residues long: DNA mismatch repair protein MutL (596 aa).

Belongs to the DNA mismatch repair MutL/HexB family.

Its function is as follows. This protein is involved in the repair of mismatches in DNA. It is required for dam-dependent methyl-directed DNA mismatch repair. May act as a 'molecular matchmaker', a protein that promotes the formation of a stable complex between two or more DNA-binding proteins in an ATP-dependent manner without itself being part of a final effector complex. The sequence is that of DNA mismatch repair protein MutL from Leptospira borgpetersenii serovar Hardjo-bovis (strain L550).